Here is a 369-residue protein sequence, read N- to C-terminus: Ubiquinone biosynthesis protein COQ4, mitochondrial (369 aa).

A mitochondrion-targeting transit peptide spans 1–28 (MTSILGSARPLIQVGPKSRNASTSMSRL). The disordered stretch occupies residues 1–70 (MTSILGSARP…NPTNASRHPR (70 aa)). Polar residues-rich tracts occupy residues 19–33 (RNAS…SFPT) and 47–66 (YATI…TNAS). H198, D199, H202, and E214 together coordinate Zn(2+). A disordered region spans residues 330-369 (FSGRAKKGGKRRGWPSKILEHQKAQHQQQQQQQKVDESRN). Residues 332 to 343 (GRAKKGGKRRGW) show a composition bias toward basic residues.

The protein belongs to the COQ4 family. As to quaternary structure, component of a multi-subunit COQ enzyme complex, composed of at least COQ3, COQ4, COQ5, COQ6, COQ7 and COQ9. Zn(2+) is required as a cofactor.

Its subcellular location is the mitochondrion inner membrane. It catalyses the reaction a 4-hydroxy-3-methoxy-5-(all-trans-polyprenyl)benzoate + H(+) = a 2-methoxy-6-(all-trans-polyprenyl)phenol + CO2. The protein operates within cofactor biosynthesis; ubiquinone biosynthesis. Functionally, lyase that catalyzes the C1-decarboxylation of 4-hydroxy-3-methoxy-5-(all-trans-polyprenyl)benzoic acid into 2-methoxy-6-(all-trans-polyprenyl)phenol during ubiquinone biosynthesis. The protein is Ubiquinone biosynthesis protein COQ4, mitochondrial of Mycosarcoma maydis (Corn smut fungus).